The chain runs to 315 residues: Methionyl-tRNA formyltransferase (315 aa).

113–116 contacts (6S)-5,6,7,8-tetrahydrofolate; it reads SLLP.

This sequence belongs to the Fmt family.

It carries out the reaction L-methionyl-tRNA(fMet) + (6R)-10-formyltetrahydrofolate = N-formyl-L-methionyl-tRNA(fMet) + (6S)-5,6,7,8-tetrahydrofolate + H(+). Its function is as follows. Attaches a formyl group to the free amino group of methionyl-tRNA(fMet). The formyl group appears to play a dual role in the initiator identity of N-formylmethionyl-tRNA by promoting its recognition by IF2 and preventing the misappropriation of this tRNA by the elongation apparatus. In Escherichia coli (strain SMS-3-5 / SECEC), this protein is Methionyl-tRNA formyltransferase.